The following is a 276-amino-acid chain: Protein FAM151B (276 aa).

Belongs to the menorin family.

Its function is as follows. Essential for survival of retinal photoreceptor cells. This chain is Protein FAM151B (FAM151B), found in Homo sapiens (Human).